The primary structure comprises 252 residues: Probable transcriptional regulatory protein THA_1246 (252 aa).

The protein belongs to the TACO1 family.

The protein localises to the cytoplasm. The protein is Probable transcriptional regulatory protein THA_1246 of Thermosipho africanus (strain TCF52B).